Here is a 188-residue protein sequence, read N- to C-terminus: Methylamine dehydrogenase light chain (188 aa).

Positions 1 to 57 (MLGNFRFDDMVEKLSRRVAGRTSRRGAIGRLGTVLAGAALVPLLPVDRRGRVSRANA) form a signal peptide, tat-type signal. 6 cysteine pairs are disulfide-bonded: C80–C145, C86–C118, C93–C178, C95–C143, C103–C134, and C135–C166. The residue at position 114 (W114) is a Tryptophylquinone. A cross-link (tryptophan tryptophylquinone (Trp-Trp)) is located at residues 114 to 165 (WVASCYNPTDGQSYLIAYRDCCGYNVSGRCPCLNTEGELPVYRPEFANDIIW).

The protein belongs to the aromatic amine dehydrogenase light chain family. As to quaternary structure, heterotetramer of two light and two heavy chains. Tryptophan tryptophylquinone residue serves as cofactor. In terms of processing, predicted to be exported by the Tat system. The position of the signal peptide cleavage has been experimentally proven. Tryptophan tryptophylquinone (TTQ) is formed by oxidation of the indole ring of a tryptophan to form tryptophylquinone followed by covalent cross-linking with another tryptophan residue.

It is found in the periplasm. The enzyme catalyses 2 oxidized [amicyanin] + methylamine + H2O = 2 reduced [amicyanin] + formaldehyde + NH4(+) + 2 H(+). It participates in one-carbon metabolism; methylamine degradation; formaldehyde from methylamine: step 1/1. Its function is as follows. Methylamine dehydrogenase carries out the oxidation of methylamine. Electrons are passed from methylamine dehydrogenase to amicyanin. The chain is Methylamine dehydrogenase light chain (mauA) from Paracoccus versutus (Thiobacillus versutus).